Reading from the N-terminus, the 530-residue chain is Autoinducer-2 kinase (530 aa).

Belongs to the FGGY kinase family.

The protein localises to the cytoplasm. It carries out the reaction (S)-4,5-dihydroxypentane-2,3-dione + ATP = (2S)-2-hydroxy-3,4-dioxopentyl phosphate + ADP + H(+). In terms of biological role, catalyzes the phosphorylation of autoinducer-2 (AI-2) to phospho-AI-2, which subsequently inactivates the transcriptional regulator LsrR and leads to the transcription of the lsr operon. Phosphorylates the ring-open form of (S)-4,5-dihydroxypentane-2,3-dione (DPD), which is the precursor to all AI-2 signaling molecules, at the C5 position. The sequence is that of Autoinducer-2 kinase from Salmonella choleraesuis (strain SC-B67).